We begin with the raw amino-acid sequence, 131 residues long: Small ribosomal subunit protein uS11 (131 aa).

The protein belongs to the universal ribosomal protein uS11 family. Part of the 30S ribosomal subunit.

Located on the platform of the 30S subunit. This is Small ribosomal subunit protein uS11 from Methanospirillum hungatei JF-1 (strain ATCC 27890 / DSM 864 / NBRC 100397 / JF-1).